The sequence spans 947 residues: Translation initiation factor IF-2 (947 aa).

The interval 61–284 (IQANQPAKNP…TAKNNKSHKI (224 aa)) is disordered. A compositionally biased stretch (basic and acidic residues) spans 151–169 (QIEKAKQKLQEIQKSREAL). Over residues 175–188 (SNANNANSTNNANN) the composition is skewed to low complexity. Positions 189–206 (AKKEISEVKKQEQEIKRH) are enriched in basic and acidic residues. The span at 207-218 (ENIKRRTGFRVI) shows a compositional bias: basic residues. Residues 247-262 (EDIKKEWQEKDKQEAK) show a composition bias toward basic and acidic residues. Residues 446–615 (ERPPVVTIMG…LIQADIMELK (170 aa)) enclose the tr-type G domain. The tract at residues 455–462 (GHVDHGKT) is G1. 455-462 (GHVDHGKT) is a GTP binding site. The segment at 480-484 (GITQH) is G2. The segment at 501–504 (DTPG) is G3. GTP is bound by residues 501-505 (DTPGH) and 555-558 (NKMD). Residues 555-558 (NKMD) form a G4 region. Residues 591 to 593 (SAK) form a G5 region.

It belongs to the TRAFAC class translation factor GTPase superfamily. Classic translation factor GTPase family. IF-2 subfamily.

The protein resides in the cytoplasm. Its function is as follows. One of the essential components for the initiation of protein synthesis. Protects formylmethionyl-tRNA from spontaneous hydrolysis and promotes its binding to the 30S ribosomal subunits. Also involved in the hydrolysis of GTP during the formation of the 70S ribosomal complex. This Helicobacter pylori (strain P12) protein is Translation initiation factor IF-2.